Consider the following 533-residue polypeptide: Glucose-6-phosphate isomerase (533 aa).

Glu-341 (proton donor) is an active-site residue. Residues His-372 and Lys-501 contribute to the active site.

The protein belongs to the GPI family.

It localises to the cytoplasm. The catalysed reaction is alpha-D-glucose 6-phosphate = beta-D-fructose 6-phosphate. The protein operates within carbohydrate biosynthesis; gluconeogenesis. It participates in carbohydrate degradation; glycolysis; D-glyceraldehyde 3-phosphate and glycerone phosphate from D-glucose: step 2/4. In terms of biological role, catalyzes the reversible isomerization of glucose-6-phosphate to fructose-6-phosphate. This chain is Glucose-6-phosphate isomerase, found in Cereibacter sphaeroides (strain ATCC 17029 / ATH 2.4.9) (Rhodobacter sphaeroides).